The primary structure comprises 629 residues: DNA-directed RNA polymerase subunit beta' (629 aa).

The Zn(2+) site is built by Cys70, Cys72, Cys85, and Cys88. Residues Asp472, Asp474, and Asp476 each contribute to the Mg(2+) site.

It belongs to the RNA polymerase beta' chain family. RpoC1 subfamily. In plastids the minimal PEP RNA polymerase catalytic core is composed of four subunits: alpha, beta, beta', and beta''. When a (nuclear-encoded) sigma factor is associated with the core the holoenzyme is formed, which can initiate transcription. The cofactor is Mg(2+). It depends on Zn(2+) as a cofactor.

It is found in the plastid. Its subcellular location is the chloroplast. It catalyses the reaction RNA(n) + a ribonucleoside 5'-triphosphate = RNA(n+1) + diphosphate. DNA-dependent RNA polymerase catalyzes the transcription of DNA into RNA using the four ribonucleoside triphosphates as substrates. This Pyropia yezoensis (Susabi-nori) protein is DNA-directed RNA polymerase subunit beta'.